The primary structure comprises 456 residues: tRNA modification GTPase MnmE (456 aa).

Arginine 26, glutamate 86, and arginine 125 together coordinate (6S)-5-formyl-5,6,7,8-tetrahydrofolate. In terms of domain architecture, TrmE-type G spans 222–376; sequence GLSTAIIGRP…IEDRINQLFF (155 aa). Asparagine 232 provides a ligand contact to K(+). GTP-binding positions include 232–237, 251–257, and 276–279; these read NVGKSS, TDIEGTT, and DTAG. Serine 236 lines the Mg(2+) pocket. K(+)-binding residues include threonine 251, isoleucine 253, and threonine 256. Mg(2+) is bound at residue threonine 257. Lysine 456 lines the (6S)-5-formyl-5,6,7,8-tetrahydrofolate pocket.

The protein belongs to the TRAFAC class TrmE-Era-EngA-EngB-Septin-like GTPase superfamily. TrmE GTPase family. As to quaternary structure, homodimer. Heterotetramer of two MnmE and two MnmG subunits. K(+) is required as a cofactor.

It localises to the cytoplasm. In terms of biological role, exhibits a very high intrinsic GTPase hydrolysis rate. Involved in the addition of a carboxymethylaminomethyl (cmnm) group at the wobble position (U34) of certain tRNAs, forming tRNA-cmnm(5)s(2)U34. This is tRNA modification GTPase MnmE from Streptococcus thermophilus (strain CNRZ 1066).